A 297-amino-acid polypeptide reads, in one-letter code: Phosphatidylserine decarboxylase proenzyme (297 aa).

Catalysis depends on charge relay system; for autoendoproteolytic cleavage activity residues aspartate 112, histidine 168, and serine 255. Serine 255 serves as the catalytic Schiff-base intermediate with substrate; via pyruvic acid; for decarboxylase activity. Serine 255 carries the post-translational modification Pyruvic acid (Ser); by autocatalysis.

It belongs to the phosphatidylserine decarboxylase family. PSD-B subfamily. Prokaryotic type II sub-subfamily. Heterodimer of a large membrane-associated beta subunit and a small pyruvoyl-containing alpha subunit. Pyruvate is required as a cofactor. Is synthesized initially as an inactive proenzyme. Formation of the active enzyme involves a self-maturation process in which the active site pyruvoyl group is generated from an internal serine residue via an autocatalytic post-translational modification. Two non-identical subunits are generated from the proenzyme in this reaction, and the pyruvate is formed at the N-terminus of the alpha chain, which is derived from the carboxyl end of the proenzyme. The autoendoproteolytic cleavage occurs by a canonical serine protease mechanism, in which the side chain hydroxyl group of the serine supplies its oxygen atom to form the C-terminus of the beta chain, while the remainder of the serine residue undergoes an oxidative deamination to produce ammonia and the pyruvoyl prosthetic group on the alpha chain. During this reaction, the Ser that is part of the protease active site of the proenzyme becomes the pyruvoyl prosthetic group, which constitutes an essential element of the active site of the mature decarboxylase.

It localises to the cell membrane. The enzyme catalyses a 1,2-diacyl-sn-glycero-3-phospho-L-serine + H(+) = a 1,2-diacyl-sn-glycero-3-phosphoethanolamine + CO2. It functions in the pathway phospholipid metabolism; phosphatidylethanolamine biosynthesis; phosphatidylethanolamine from CDP-diacylglycerol: step 2/2. Its function is as follows. Catalyzes the formation of phosphatidylethanolamine (PtdEtn) from phosphatidylserine (PtdSer). The sequence is that of Phosphatidylserine decarboxylase proenzyme from Clostridium tetani (strain Massachusetts / E88).